The chain runs to 428 residues: Histidine--tRNA ligase (428 aa).

It belongs to the class-II aminoacyl-tRNA synthetase family. In terms of assembly, homodimer.

Its subcellular location is the cytoplasm. The catalysed reaction is tRNA(His) + L-histidine + ATP = L-histidyl-tRNA(His) + AMP + diphosphate + H(+). The sequence is that of Histidine--tRNA ligase from Lactobacillus delbrueckii subsp. bulgaricus (strain ATCC 11842 / DSM 20081 / BCRC 10696 / JCM 1002 / NBRC 13953 / NCIMB 11778 / NCTC 12712 / WDCM 00102 / Lb 14).